A 319-amino-acid chain; its full sequence is HPr kinase/phosphorylase (319 aa).

Active-site residues include histidine 137 and lysine 158. Position 152–159 (152–159 (GDSGVGKS)) interacts with ATP. Serine 159 contributes to the Mg(2+) binding site. Aspartate 176 (proton acceptor; for phosphorylation activity. Proton donor; for dephosphorylation activity) is an active-site residue. An important for the catalytic mechanism of both phosphorylation and dephosphorylation region spans residues 201 to 210 (MEIRGLGIIN). Glutamate 202 is a Mg(2+) binding site. Residue arginine 243 is part of the active site. Residues 264 to 269 (PVRPGR) form an important for the catalytic mechanism of dephosphorylation region.

Belongs to the HPrK/P family. Homohexamer. Mg(2+) serves as cofactor.

It catalyses the reaction [HPr protein]-L-serine + ATP = [HPr protein]-O-phospho-L-serine + ADP + H(+). It carries out the reaction [HPr protein]-O-phospho-L-serine + phosphate + H(+) = [HPr protein]-L-serine + diphosphate. Catalyzes the ATP- as well as the pyrophosphate-dependent phosphorylation of a specific serine residue in HPr, a phosphocarrier protein of the phosphoenolpyruvate-dependent sugar phosphotransferase system (PTS). HprK/P also catalyzes the pyrophosphate-producing, inorganic phosphate-dependent dephosphorylation (phosphorolysis) of seryl-phosphorylated HPr (P-Ser-HPr). This is HPr kinase/phosphorylase from Treponema pallidum subsp. pallidum (strain SS14).